Reading from the N-terminus, the 395-residue chain is MTEKIRECIRQFLQMEAAGGILLLVFSVGAVIFANSPLRDHYFSFLNAPVIIQFGSIVELNKPLLMWVNDGFMAIFFVLVGLEVKREMLIGAISSYQKAIFPAIAACGGMIVPALVYWLVNQGVPDYHGGWAIPMATDIAFAIGVLVLLGTRVPLALKVFLLALAIIDDLGAIIVIALFFSHDLSTKALILASIAIVGLILLNRFKVSNLIAYVVVGIILWVSVLKSGVHATLAGVIIGFCVPLKGKNNSEPLVEMEHAIAPWSSFLILPLFAFCNAGIPLSGLGMEALTSPLTLGVTLGLLLGKPIGVFLFSYLSVKLHIAKLPEGINFKQIFAVSVLCGIGFTMSMFLASLAFGGGDGHLTAYARLGILFGSSVSAVVGYWLLFVTTKENANQ.

The next 12 membrane-spanning stretches (helical) occupy residues 18 to 38 (AGGI…NSPL), 64 to 84 (LLMW…GLEV), 100 to 120 (IFPA…YWLV), 129 to 149 (GGWA…LVLL), 160 to 180 (FLLA…ALFF), 182 to 202 (HDLS…LILL), 205 to 225 (FKVS…VSVL), 226 to 246 (KSGV…PLKG), 266 to 286 (FLIL…GLGM), 295 to 315 (LGVT…FSYL), 333 to 353 (IFAV…LASL), and 368 to 388 (LGIL…LFVT).

The protein belongs to the NhaA Na(+)/H(+) (TC 2.A.33) antiporter family.

The protein resides in the cell inner membrane. The catalysed reaction is Na(+)(in) + 2 H(+)(out) = Na(+)(out) + 2 H(+)(in). Functionally, na(+)/H(+) antiporter that extrudes sodium in exchange for external protons. In Histophilus somni (strain 129Pt) (Haemophilus somnus), this protein is Na(+)/H(+) antiporter NhaA.